Consider the following 215-residue polypeptide: Outer-membrane lipoprotein carrier protein (215 aa).

The signal sequence occupies residues 1–24 (MFVLKARHLMAAGLVSLAAWSAGA).

It belongs to the LolA family. As to quaternary structure, monomer.

It is found in the periplasm. Participates in the translocation of lipoproteins from the inner membrane to the outer membrane. Only forms a complex with a lipoprotein if the residue after the N-terminal Cys is not an aspartate (The Asp acts as a targeting signal to indicate that the lipoprotein should stay in the inner membrane). In Ralstonia nicotianae (strain ATCC BAA-1114 / GMI1000) (Ralstonia solanacearum), this protein is Outer-membrane lipoprotein carrier protein.